A 125-amino-acid chain; its full sequence is Phosphoribosyl-AMP cyclohydrolase (125 aa).

A Mg(2+)-binding site is contributed by D74. C75 contacts Zn(2+). D76 and D78 together coordinate Mg(2+). Positions 92 and 99 each coordinate Zn(2+).

It belongs to the PRA-CH family. In terms of assembly, homodimer. It depends on Mg(2+) as a cofactor. Zn(2+) serves as cofactor.

The protein localises to the cytoplasm. It catalyses the reaction 1-(5-phospho-beta-D-ribosyl)-5'-AMP + H2O = 1-(5-phospho-beta-D-ribosyl)-5-[(5-phospho-beta-D-ribosylamino)methylideneamino]imidazole-4-carboxamide. Its pathway is amino-acid biosynthesis; L-histidine biosynthesis; L-histidine from 5-phospho-alpha-D-ribose 1-diphosphate: step 3/9. Its function is as follows. Catalyzes the hydrolysis of the adenine ring of phosphoribosyl-AMP. This chain is Phosphoribosyl-AMP cyclohydrolase, found in Geobacter metallireducens (strain ATCC 53774 / DSM 7210 / GS-15).